The following is a 279-amino-acid chain: Apolipoprotein L domain-containing protein 1 (279 aa).

Helical transmembrane passes span Ser83–Leu105, Gly122–Phe142, and Ile192–Pro212. Residues Leu226 to Ser253 are a coiled coil.

Belongs to the apolipoprotein L family. Expressed in neonatal dermal microvascular endothelial cells.

The protein resides in the cell membrane. It localises to the cell junction. It is found in the cytoplasmic vesicle. Its subcellular location is the secretory vesicle. Functionally, is a modulator of endothelial barrier permeability, required for proper organization of endothelial cell-cell junctions and cytoskeleton. It also plays a role in the modulation of secretory autophagy. May affect blood-brain barrier permeability. The sequence is that of Apolipoprotein L domain-containing protein 1 (APOLD1) from Homo sapiens (Human).